The following is a 65-amino-acid chain: Sec-independent protein translocase protein TatA (65 aa).

Residues 9–29 form a helical membrane-spanning segment; sequence ILIIVLLVVVVFGVGKLPQVG. Residues 40 to 65 are disordered; it reads RKASTGEDAKEEVETKEETKPAEKSE. The span at 43 to 65 shows a compositional bias: basic and acidic residues; sequence STGEDAKEEVETKEETKPAEKSE.

Belongs to the TatA/E family. In terms of assembly, forms a complex with TatC.

It localises to the cell membrane. Part of the twin-arginine translocation (Tat) system that transports large folded proteins containing a characteristic twin-arginine motif in their signal peptide across membranes. TatA could form the protein-conducting channel of the Tat system. The protein is Sec-independent protein translocase protein TatA of Dehalococcoides mccartyi (strain ATCC BAA-2100 / JCM 16839 / KCTC 5957 / BAV1).